The following is a 220-amino-acid chain: FMN-dependent NADH:quinone oxidoreductase (220 aa).

FMN-binding positions include Ser-10, 17–19 (SAS), and 136–139 (SRGG). The segment at 200 to 220 (HSEAVTKAKELTERLTADNGR) is disordered.

It belongs to the azoreductase type 1 family. In terms of assembly, homodimer. FMN serves as cofactor.

The catalysed reaction is 2 a quinone + NADH + H(+) = 2 a 1,4-benzosemiquinone + NAD(+). It carries out the reaction N,N-dimethyl-1,4-phenylenediamine + anthranilate + 2 NAD(+) = 2-(4-dimethylaminophenyl)diazenylbenzoate + 2 NADH + 2 H(+). Functionally, quinone reductase that provides resistance to thiol-specific stress caused by electrophilic quinones. Also exhibits azoreductase activity. Catalyzes the reductive cleavage of the azo bond in aromatic azo compounds to the corresponding amines. The polypeptide is FMN-dependent NADH:quinone oxidoreductase (Streptomyces coelicolor (strain ATCC BAA-471 / A3(2) / M145)).